We begin with the raw amino-acid sequence, 404 residues long: Mitochondrial potassium channel (404 aa).

A mitochondrion-targeting transit peptide spans 1–30; sequence MTGRSRVLAMRHVGGVSPVLVRRDLFLTRT. Residues 31-196 are Mitochondrial matrix-facing; the sequence is LCSHGPSQPR…KERTRAERTK (166 aa). Position 65 is a phosphoserine (Ser65). The stretch at 111-138 forms a coiled coil; sequence VREAREDLESQQTKLKEVRDRLDRISRD. Residues 197–217 form a helical membrane-spanning segment; that stretch reads NWSLIGSVLGALIGVAGSTYV. At 218–380 the chain is on the mitochondrial intermembrane side; it reads NRVRLQELKA…LEAQVNRNTV (163 aa). The chain crosses the membrane as a helical span at residues 381–401; it reads YGTLVTCATFVAVLPVLYMLF. Residues 402–404 are Mitochondrial matrix-facing; sequence RAS.

The mitochondrial potassium channel (mitoK(ATP)) forms a heteromultimer.

It is found in the mitochondrion inner membrane. The enzyme catalyses K(+)(in) = K(+)(out). Its activity is regulated as follows. Channel activity inhibited by ATP via ABCB8/MITOSUR subunit. Its function is as follows. Pore-forming subunit of the mitochondrial ATP-gated potassium channel (mitoK(ATP)). Together with ATP-binding subunit ABCB8/MITOSUR of the mitoK(ATP) channel, mediates ATP-dependent K(+) currents across the mitochondrial inner membrane. An increase in ATP intracellular levels closes the channel, inhibiting K(+) transport, whereas a decrease in ATP levels enhances K(+) uptake in the mitochondrial matrix. May contribute to the homeostatic control of cellular metabolism under stress conditions by regulating the mitochondrial matrix volume. In Bos taurus (Bovine), this protein is Mitochondrial potassium channel.